We begin with the raw amino-acid sequence, 82 residues long: Small ribosomal subunit protein eS21 (82 aa).

Belongs to the eukaryotic ribosomal protein eS21 family.

This is Small ribosomal subunit protein eS21 (RPS21) from Cyanophora paradoxa.